The chain runs to 140 residues: Nucleoside diphosphate kinase (140 aa).

ATP contacts are provided by lysine 11, phenylalanine 59, arginine 87, threonine 93, arginine 104, and asparagine 114. Histidine 117 functions as the Pros-phosphohistidine intermediate in the catalytic mechanism.

Belongs to the NDK family. As to quaternary structure, homotetramer. Mg(2+) is required as a cofactor.

It is found in the cytoplasm. The enzyme catalyses a 2'-deoxyribonucleoside 5'-diphosphate + ATP = a 2'-deoxyribonucleoside 5'-triphosphate + ADP. It catalyses the reaction a ribonucleoside 5'-diphosphate + ATP = a ribonucleoside 5'-triphosphate + ADP. Functionally, major role in the synthesis of nucleoside triphosphates other than ATP. The ATP gamma phosphate is transferred to the NDP beta phosphate via a ping-pong mechanism, using a phosphorylated active-site intermediate. The polypeptide is Nucleoside diphosphate kinase (Rickettsia bellii (strain OSU 85-389)).